We begin with the raw amino-acid sequence, 145 residues long: 3-dehydroquinate dehydratase (145 aa).

The active-site Proton acceptor is the Tyr-22. Residues Asn-73, His-79, and Asp-86 each contribute to the substrate site. Catalysis depends on His-99, which acts as the Proton donor. Substrate contacts are provided by residues 100–101 (LS) and Arg-110.

This sequence belongs to the type-II 3-dehydroquinase family. As to quaternary structure, homododecamer.

The catalysed reaction is 3-dehydroquinate = 3-dehydroshikimate + H2O. The protein operates within metabolic intermediate biosynthesis; chorismate biosynthesis; chorismate from D-erythrose 4-phosphate and phosphoenolpyruvate: step 3/7. In terms of biological role, catalyzes a trans-dehydration via an enolate intermediate. The sequence is that of 3-dehydroquinate dehydratase from Prochlorococcus marinus (strain NATL1A).